The following is a 311-amino-acid chain: Putative dihydroorotate dehydrogenase A (fumarate) (311 aa).

Substrate contacts are provided by residues Lys-45, 69–73, and Asn-128; that span reads NSMGL. Residue 45-46 coordinates FMN; it reads KT. Asn-128 contributes to the FMN binding site. The active-site Nucleophile is the Cys-131. FMN is bound by residues Lys-165 and Val-193. 194-195 provides a ligand contact to substrate; the sequence is NS. Residues Gly-220, 248–249, and 270–271 contribute to the FMN site; these read GG and GT.

Belongs to the dihydroorotate dehydrogenase family. Type 1 subfamily. In terms of assembly, homodimer. FMN is required as a cofactor.

It localises to the cytoplasm. It catalyses the reaction (S)-dihydroorotate + fumarate = orotate + succinate. The protein operates within pyrimidine metabolism; UMP biosynthesis via de novo pathway. In terms of biological role, catalyzes the conversion of dihydroorotate to orotate with fumarate as the electron acceptor. The protein is Putative dihydroorotate dehydrogenase A (fumarate) (pyrD) of Streptococcus pyogenes serotype M3 (strain SSI-1).